The chain runs to 481 residues: ATP synthase subunit alpha (481 aa).

145-152 (GDRQTGKT) is a binding site for ATP.

It belongs to the ATPase alpha/beta chains family. F-type ATPases have 2 components, CF(1) - the catalytic core - and CF(0) - the membrane proton channel. CF(1) has five subunits: alpha(3), beta(3), gamma(1), delta(1), epsilon(1). CF(0) has three main subunits: a(1), b(2) and c(9-12). The alpha and beta chains form an alternating ring which encloses part of the gamma chain. CF(1) is attached to CF(0) by a central stalk formed by the gamma and epsilon chains, while a peripheral stalk is formed by the delta and b chains.

Its subcellular location is the cell membrane. The enzyme catalyses ATP + H2O + 4 H(+)(in) = ADP + phosphate + 5 H(+)(out). Functionally, produces ATP from ADP in the presence of a proton gradient across the membrane. The alpha chain is a regulatory subunit. The chain is ATP synthase subunit alpha from Carsonella ruddii (strain PV).